The following is a 215-amino-acid chain: Orotidine 5'-phosphate decarboxylase (215 aa).

Substrate-binding positions include D12, K34, 60–69 (DFKVADIPNT), S117, 170–180 (PGVGAQGGSAA), G193, and R194. The active-site Proton donor is the K62.

It belongs to the OMP decarboxylase family. Type 1 subfamily. Homodimer.

It carries out the reaction orotidine 5'-phosphate + H(+) = UMP + CO2. It functions in the pathway pyrimidine metabolism; UMP biosynthesis via de novo pathway; UMP from orotate: step 2/2. In terms of biological role, catalyzes the decarboxylation of orotidine 5'-monophosphate (OMP) to uridine 5'-monophosphate (UMP). The protein is Orotidine 5'-phosphate decarboxylase of Methanococcoides burtonii (strain DSM 6242 / NBRC 107633 / OCM 468 / ACE-M).